A 185-amino-acid polypeptide reads, in one-letter code: Threonylcarbamoyl-AMP synthase (185 aa).

Positions 4 to 185 (SFRVQQAARE…LATGEVVRPG (182 aa)) constitute a YrdC-like domain.

The protein belongs to the SUA5 family. TsaC subfamily.

It localises to the cytoplasm. It carries out the reaction L-threonine + hydrogencarbonate + ATP = L-threonylcarbamoyladenylate + diphosphate + H2O. Functionally, required for the formation of a threonylcarbamoyl group on adenosine at position 37 (t(6)A37) in tRNAs that read codons beginning with adenine. Catalyzes the conversion of L-threonine, HCO(3)(-)/CO(2) and ATP to give threonylcarbamoyl-AMP (TC-AMP) as the acyladenylate intermediate, with the release of diphosphate. This Pseudomonas putida (strain ATCC 700007 / DSM 6899 / JCM 31910 / BCRC 17059 / LMG 24140 / F1) protein is Threonylcarbamoyl-AMP synthase.